A 299-amino-acid polypeptide reads, in one-letter code: tRNA pseudouridine synthase A (299 aa).

Residue aspartate 67 is the Nucleophile of the active site. Residue tyrosine 125 participates in substrate binding.

It belongs to the tRNA pseudouridine synthase TruA family. As to quaternary structure, homodimer.

It carries out the reaction uridine(38/39/40) in tRNA = pseudouridine(38/39/40) in tRNA. Functionally, formation of pseudouridine at positions 38, 39 and 40 in the anticodon stem and loop of transfer RNAs. This Parasynechococcus marenigrum (strain WH8102) protein is tRNA pseudouridine synthase A.